The sequence spans 474 residues: PTS system N-acetylmuramic acid-specific EIIBC component (474 aa).

Residues 1-89 (MAKEISSELL…SELLGEAPVQ (89 aa)) enclose the PTS EIIB type-1 domain. Residues 1–123 (MAKEISSELL…LAKFATIFTP (123 aa)) lie on the Cytoplasmic side of the membrane. Catalysis depends on cysteine 29, which acts as the Phosphocysteine intermediate; for EIIB activity. The 360-residue stretch at 115 to 474 (AKFATIFTPL…LFGCRNVNLD (360 aa)) folds into the PTS EIIC type-1 domain. The chain crosses the membrane as a helical span at residues 124-144 (LIPGFIAAGLLLGIATLIATV). The Periplasmic segment spans residues 145–157 (MHVPADAQGTLPD). A helical membrane pass occupies residues 158-178 (ALNFMKVFSKGLFTFLVILVG). Over 179–180 (YN) the chain is Cytoplasmic. The helical transmembrane segment at 181-201 (AAQAFGGTGVNGAIIAALFLL) threads the bilayer. Residues 202–217 (GYNPAATTGYYAGFHD) lie on the Periplasmic side of the membrane. The chain crosses the membrane as a helical span at residues 218-238 (FFGLPIDPRGNIIGVLIAAWA). Residues 239-260 (CARIEGMVRRFMPDDLDMLLTS) are Cytoplasmic-facing. A helical membrane pass occupies residues 261–281 (LITLLITATLAYLIIMPLGGW). Residues 282–301 (LFEGMSWLFMHLNSNPLGCA) are Periplasmic-facing. A helical membrane pass occupies residues 302–322 (VLAGLFLIAVVFGVHQGFIPV). The Cytoplasmic portion of the chain corresponds to 323–334 (YLALMDSQGFNS). A helical membrane pass occupies residues 335-355 (LFPILSMAGAGQVGAALALYW). The Periplasmic portion of the chain corresponds to 356–368 (RAQPHSGLRSQVR). Residues 369 to 389 (GAIIPGLLGVGEPLIYGVTLP) traverse the membrane as a helical segment. Over 390–393 (RMKP) the chain is Cytoplasmic. Residues 394 to 414 (FITACLGGAAGGLFIGLIAWW) form a helical membrane-spanning segment. Residues 415-440 (GLPMGLNSAFGPSGLVALPLMTSAQG) are Periplasmic-facing. A helical transmembrane segment spans residues 441–461 (ILPAMAIYAGGILVAWVCGFI). Residues 462 to 474 (FTTLFGCRNVNLD) lie on the Cytoplasmic side of the membrane.

It is found in the cell inner membrane. It catalyses the reaction N-acetyl-beta-D-muramate(out) + N(pros)-phospho-L-histidyl-[protein] = N-acetyl-beta-D-muramate 6-phosphate(in) + L-histidyl-[protein]. In terms of biological role, the phosphoenolpyruvate-dependent sugar phosphotransferase system (sugar PTS), a major carbohydrate active transport system, catalyzes the phosphorylation of incoming sugar substrates concomitantly with their translocation across the cell membrane. This system is involved in N-acetylmuramic acid (MurNAc) transport, yielding cytoplasmic MurNAc-6-P. Is also able to take up anhydro-N-acetylmuramic acid (anhMurNAc), but cannot phosphorylate the carbon 6, probably because of the 1,6-anhydro ring. This Shigella dysenteriae serotype 1 (strain Sd197) protein is PTS system N-acetylmuramic acid-specific EIIBC component (murP).